Reading from the N-terminus, the 483-residue chain is Arginine/agmatine antiporter (483 aa).

Transmembrane regions (helical) follow at residues 11 to 33 (ILGTLALTGIVISYMIGGGIFSL), 48 to 70 (LAWMLSGIGIFFIANTFKTLSII), 90 to 112 (VGFTIAWGYWLCQIFGNVGYAVI), 127 to 149 (GGNTIPAILLGSLLIWIFNYIVL), 156 to 178 (SFVNIIGVVCTLIPLLLFILITA), 209 to 228 (TMLVTLWAFIGIEGAVVISG), 241 to 263 (ILGFSGCLLIYVLLSLLPFGSLF), 293 to 315 (TGLLIAVLTSWLSWTILASEIPY), 335 to 357 (APSFSLFMTSGLMQITMLLVYFS), 367 to 389 (ITGVMVLPAYLTSSLFLVKFSLS), 415 to 435 (LWLIYAGGLQHLFMVAILLAL), and 458 to 477 (EILKMTIMALAALLAIFLFS).

This sequence belongs to the amino acid-polyamine-organocation (APC) superfamily. Basic amino acid/polyamine antiporter (APA) (TC 2.A.3.2) family.

The protein resides in the cell inner membrane. Its function is as follows. Catalyzes the exchange of L-arginine for agmatine. The arginine uptake by the bacterium in the macrophage may be a virulence factor against the host innate immune response. The protein is Arginine/agmatine antiporter (aaxC) of Chlamydia trachomatis serovar L2 (strain ATCC VR-902B / DSM 19102 / 434/Bu).